An 80-amino-acid chain; its full sequence is UPF0248 protein YG5714_2801 (80 aa).

It belongs to the UPF0248 family.

The protein is UPF0248 protein YG5714_2801 of Saccharolobus islandicus (strain Y.G.57.14 / Yellowstone #1) (Sulfolobus islandicus).